A 153-amino-acid polypeptide reads, in one-letter code: Glycosylation-dependent cell adhesion molecule 1 (153 aa).

The N-terminal stretch at 1 to 18 is a signal peptide; sequence MKFLCVLLLASLAATSLA. An O-linked (GalNAc...) threonine; partial glycan is attached at Thr34. Phosphoserine is present on residues Ser47, Ser52, Ser56, Ser58, and Ser64. O-linked (HexNAc...) serine glycosylation is present at Ser78. Asn95 carries an N-linked (GlcNAc...) asparagine glycan. Residues 95 to 115 are disordered; it reads NATLGSEETTEHTPSDASTTE. Residue Thr104 is glycosylated (O-linked (GalNAc...) threonine).

It belongs to the PP3/GlyCAM-1 family. Highly and specifically expressed in the lactating mammary gland.

It is found in the membrane. The chain is Glycosylation-dependent cell adhesion molecule 1 (GLYCAM1) from Bos taurus (Bovine).